A 282-amino-acid chain; its full sequence is Transmembrane protein 41B (282 aa).

The disordered stretch occupies residues 1-36; the sequence is MAKKRAGNRETESSPLVEQEPRPSKETPVPKGAQSP. 6 consecutive transmembrane segments (helical) span residues 43–63, 102–122, 138–160, 188–208, 216–236, and 251–271; these read MSIL…YLVF, TQVL…AIPG, LALF…LSYL, LINY…FINI, PLGV…FVAI, and AVSW…ILPV. The segment at 131–242 is VTT domain; required for its function in autophagy; the sequence is GYLYPFPLAL…FVAINAGTTL (112 aa).

Belongs to the TMEM41 family.

The protein localises to the endoplasmic reticulum membrane. It is found in the endomembrane system. It carries out the reaction a 1,2-diacyl-sn-glycero-3-phospho-L-serine(in) = a 1,2-diacyl-sn-glycero-3-phospho-L-serine(out). It catalyses the reaction cholesterol(in) = cholesterol(out). The catalysed reaction is a 1,2-diacyl-sn-glycero-3-phosphocholine(in) = a 1,2-diacyl-sn-glycero-3-phosphocholine(out). The enzyme catalyses a 1,2-diacyl-sn-glycero-3-phosphoethanolamine(in) = a 1,2-diacyl-sn-glycero-3-phosphoethanolamine(out). Phospholipid scramblase involved in lipid homeostasis and membrane dynamics processes. Has phospholipid scramblase activity toward cholesterol and phosphatidylserine, as well as phosphatidylethanolamine and phosphatidylcholine. Required for autophagosome formation: participates in early stages of autophagosome biogenesis at the endoplasmic reticulum (ER) membrane by reequilibrating the leaflets of the ER as lipids are extracted by atg2 (atg2a or atg2b) to mediate autophagosome assembly. In addition to autophagy, involved in other processes in which phospholipid scramblase activity is required. Required for normal motor neuron development. This Danio rerio (Zebrafish) protein is Transmembrane protein 41B.